The chain runs to 284 residues: Nucleotide-binding protein Teth39_0666 (284 aa).

Residue 8–15 (GLSGAGKT) participates in ATP binding. 58–61 (DLRG) contacts GTP.

The protein belongs to the RapZ-like family.

In terms of biological role, displays ATPase and GTPase activities. The chain is Nucleotide-binding protein Teth39_0666 from Thermoanaerobacter pseudethanolicus (strain ATCC 33223 / 39E) (Clostridium thermohydrosulfuricum).